The primary structure comprises 178 residues: MGGFRFHQYQVVGRALPTENDEHPKIYRMKLWGRNEVCAKSKFWYFMRKLKKVKKSNGQMLAINEIFEKNPTTIKNYGIWLRYQSRTGYHNMYKEYRDTTLNGGVEQMYTEMASRHRVRFPCIQIIKTATVPAKLCKREITKQFHNSKIKFPLVFRKVRPPSRKLKTTYKASKPNLFM.

This sequence belongs to the eukaryotic ribosomal protein eL20 family.

The chain is Large ribosomal subunit protein eL20x (RPL18AC) from Arabidopsis thaliana (Mouse-ear cress).